The primary structure comprises 129 residues: Small ribosomal subunit protein uS11 (129 aa).

The protein belongs to the universal ribosomal protein uS11 family. In terms of assembly, part of the 30S ribosomal subunit. Interacts with proteins S7 and S18. Binds to IF-3.

Functionally, located on the platform of the 30S subunit, it bridges several disparate RNA helices of the 16S rRNA. Forms part of the Shine-Dalgarno cleft in the 70S ribosome. The polypeptide is Small ribosomal subunit protein uS11 (Phenylobacterium zucineum (strain HLK1)).